The following is a 138-amino-acid chain: uncharacterized protein (138 aa).

35–42 (DFIGSFYN) contributes to the ATP binding site.

This is an uncharacterized protein from Acanthamoeba polyphaga mimivirus (APMV).